We begin with the raw amino-acid sequence, 348 residues long: uncharacterized protein (348 aa).

6 WD repeats span residues 59 to 98, 142 to 182, 185 to 226, 229 to 267, 270 to 309, and 312 to 347; these read GFQGIITALNITPDGKYLAVATADNQITLIDLANQEVVYS, GHTD…LIQT, DNLG…LLGT, QQPGFINGLAVTPDGRKLVGAVRNFVKAWNLADAKELFS, GPSLEINTIAVSPNNRWVATANKEGTIMIFDLANGKQVTT, and GHQGWVLSLAFSPDGNTLYSGAEDKTVKIWDLSALA.

This is an uncharacterized protein from Synechocystis sp. (strain ATCC 27184 / PCC 6803 / Kazusa).